The sequence spans 487 residues: Homoserine O-acetyltransferase (487 aa).

The AB hydrolase-1 domain occupies 45–352; the sequence is NVILVCHPLT…PHGHDGFLLE (308 aa). The Nucleophile role is filled by serine 150. Arginine 219 is a substrate binding site. Catalysis depends on residues aspartate 313 and histidine 346. Aspartate 347 contributes to the substrate binding site. CBS domains are found at residues 373–430 and 434–487; these read MTNN…FQDL and MTKD…EVLQ.

This sequence belongs to the AB hydrolase superfamily. MetX family. Homodimer.

The protein resides in the cytoplasm. The enzyme catalyses L-homoserine + acetyl-CoA = O-acetyl-L-homoserine + CoA. It functions in the pathway amino-acid biosynthesis; L-methionine biosynthesis via de novo pathway; O-acetyl-L-homoserine from L-homoserine: step 1/1. Transfers an acetyl group from acetyl-CoA to L-homoserine, forming acetyl-L-homoserine. The polypeptide is Homoserine O-acetyltransferase (Methanocorpusculum labreanum (strain ATCC 43576 / DSM 4855 / Z)).